The chain runs to 90 residues: Large ribosomal subunit protein bL27 (90 aa).

Belongs to the bacterial ribosomal protein bL27 family.

The sequence is that of Large ribosomal subunit protein bL27 from Paracoccus denitrificans (strain Pd 1222).